Consider the following 361-residue polypeptide: Ornithine carbamoyltransferase, mitochondrial (361 aa).

Residues Met-1–Ser-24 constitute a mitochondrion transit peptide. Carbamoyl phosphate contacts are provided by residues Ser-89–Thr-92, Arg-140, His-167, and Gln-170. Residues Asn-207, Asp-273, Ser-277, and Met-278 each coordinate L-ornithine. Catalysis depends on Cys-315, which acts as the Proton acceptor. Carbamoyl phosphate-binding positions include Cys-315–Leu-316 and Arg-342.

The protein belongs to the aspartate/ornithine carbamoyltransferase superfamily. OTCase family. In terms of assembly, homotrimer.

The protein localises to the mitochondrion matrix. It carries out the reaction carbamoyl phosphate + L-ornithine = L-citrulline + phosphate + H(+). Its pathway is amino-acid biosynthesis; L-arginine biosynthesis; L-arginine from L-ornithine and carbamoyl phosphate: step 1/3. This Aspergillus terreus protein is Ornithine carbamoyltransferase, mitochondrial (arg1).